We begin with the raw amino-acid sequence, 110 residues long: Acylphosphatase (110 aa).

In terms of domain architecture, Acylphosphatase-like spans 24 to 110 (RVRVYVSGRV…SGGARGFEVR (87 aa)). Active-site residues include R39 and N57.

The protein belongs to the acylphosphatase family.

It catalyses the reaction an acyl phosphate + H2O = a carboxylate + phosphate + H(+). In Rubrobacter xylanophilus (strain DSM 9941 / JCM 11954 / NBRC 16129 / PRD-1), this protein is Acylphosphatase (acyP).